Reading from the N-terminus, the 457-residue chain is Serine--tRNA ligase (457 aa).

An L-serine-binding site is contributed by 252–254 (TAE). ATP contacts are provided by residues 283-285 (RKE) and V299. An L-serine-binding site is contributed by E306. 370-373 (EVVS) contacts ATP. An L-serine-binding site is contributed by T406.

This sequence belongs to the class-II aminoacyl-tRNA synthetase family. Type-1 seryl-tRNA synthetase subfamily. In terms of assembly, homodimer. The tRNA molecule binds across the dimer.

It is found in the cytoplasm. The catalysed reaction is tRNA(Ser) + L-serine + ATP = L-seryl-tRNA(Ser) + AMP + diphosphate + H(+). It carries out the reaction tRNA(Sec) + L-serine + ATP = L-seryl-tRNA(Sec) + AMP + diphosphate + H(+). Its pathway is aminoacyl-tRNA biosynthesis; selenocysteinyl-tRNA(Sec) biosynthesis; L-seryl-tRNA(Sec) from L-serine and tRNA(Sec): step 1/1. Functionally, catalyzes the attachment of serine to tRNA(Ser). Is also able to aminoacylate tRNA(Sec) with serine, to form the misacylated tRNA L-seryl-tRNA(Sec), which will be further converted into selenocysteinyl-tRNA(Sec). This Thermococcus onnurineus (strain NA1) protein is Serine--tRNA ligase.